Reading from the N-terminus, the 338-residue chain is MSTLRLLISDSYDPWFNLAVEECIFRQMPATQRVLFLWRNADTVVIGRAQNPWKECNTRRMEEDNVRLARRSSGGGAVFHDLGNTCFTFMAGKPEYDKTISTSIVLNALNALGVSAEASGRNDLVVKTAEGDRKVSGSAYRETKDRGFHHGTLLLNADLSRLANYLNPDKKKLAAKGITSVRSRVTNLTELLPGITHEQVCEAITEAFFAHYGERVEAEIISPDKTPDLPNFAETFARQSSWEWNFGQAPAFSHLLDERFTWGGVELHFDVEKGHITRAQVFTDSLNPAPLEALAGRLQGCLYRADMLQQECEALLVDFPEQEKELRELSAWMAGAVR.

Residues 29 to 216 (PATQRVLFLW…AFFAHYGERV (188 aa)) form the BPL/LPL catalytic domain. Residues Arg-71, 76–79 (GAVF), and Lys-134 each bind ATP. Residue Lys-134 coordinates (R)-lipoate.

The protein belongs to the LplA family. Monomer.

It is found in the cytoplasm. The enzyme catalyses L-lysyl-[lipoyl-carrier protein] + (R)-lipoate + ATP = N(6)-[(R)-lipoyl]-L-lysyl-[lipoyl-carrier protein] + AMP + diphosphate + H(+). It participates in protein modification; protein lipoylation via exogenous pathway; protein N(6)-(lipoyl)lysine from lipoate: step 1/2. It functions in the pathway protein modification; protein lipoylation via exogenous pathway; protein N(6)-(lipoyl)lysine from lipoate: step 2/2. Functionally, catalyzes both the ATP-dependent activation of exogenously supplied lipoate to lipoyl-AMP and the transfer of the activated lipoyl onto the lipoyl domains of lipoate-dependent enzymes. In Escherichia fergusonii (strain ATCC 35469 / DSM 13698 / CCUG 18766 / IAM 14443 / JCM 21226 / LMG 7866 / NBRC 102419 / NCTC 12128 / CDC 0568-73), this protein is Lipoate-protein ligase A.